The following is a 410-amino-acid chain: G-protein coupled receptor family C group 5 member B (410 aa).

The N-terminal stretch at 1–28 is a signal peptide; it reads MFLVLERKMRTHQVFPLPLLLVIASVAS. Topologically, residues 29-56 are extracellular; it reads ENASTSRGCGLDLLPQYVSLCDLDAIWG. A glycan (N-linked (GlcNAc...) asparagine) is linked at Asn30. A helical transmembrane segment spans residues 57–77; the sequence is IVVEAVAGAGALITLLLMLIL. Topologically, residues 78-94 are cytoplasmic; it reads LVRLPFIKDKERKRPVC. The helical transmembrane segment at 95–115 threads the bilayer; the sequence is LHFLFLLGTLGLFGLTFAFII. The Extracellular portion of the chain corresponds to 116–126; it reads QMDETICSIRR. Residues 127–147 traverse the membrane as a helical segment; the sequence is FLWGVLFALCFSCLLSQAWRV. At 148-164 the chain is on the cytoplasmic side; that stretch reads RRLVRQGTSPASWQLVS. A helical membrane pass occupies residues 165 to 185; that stretch reads LALCLMLVQVIIATEWLVLTV. At 186-199 the chain is on the extracellular side; the sequence is LRDTKPACAYEPMD. Residues 200 to 220 form a helical membrane-spanning segment; sequence FVMALIYDMVLLAITLAQSLF. The Cytoplasmic portion of the chain corresponds to 221-234; the sequence is TLCGKFKRWKVNGA. A helical membrane pass occupies residues 235 to 255; sequence FILVTTFLSALIWVVWMTMYL. Residues 256–271 are Extracellular-facing; that stretch reads FGNSLIKQGDAWSDPT. Residues 272 to 292 traverse the membrane as a helical segment; sequence LAITLAASGWVFVIFHAIPEI. Over 293–410 the chain is Cytoplasmic; that stretch reads HYTLLPPLQE…PPSHTGRHHW (118 aa). The residue at position 355 (Ser355) is a Phosphoserine. Positions 356–381 are disordered; the sequence is LEQRSSSLGKKPSSLGNRPSAPFRSN. Over residues 360-371 the composition is skewed to low complexity; the sequence is SSSLGKKPSSLG.

It belongs to the G-protein coupled receptor 3 family.

The protein resides in the cell membrane. It localises to the cytoplasmic vesicle membrane. G-protein coupled receptor involved in the regulation of cell volume. This is G-protein coupled receptor family C group 5 member B (Gprc5b) from Mus musculus (Mouse).